The chain runs to 144 residues: Maximins 6/H10 (144 aa).

The signal sequence occupies residues 1–18 (MNFKYIVAVSFLIASAYA). Residues 19 to 43 (RSVKNDEQSLSQRDVLDEESLREIR) constitute a propeptide that is removed on maturation. The residue at position 70 (N70) is an Asparagine amide. The propeptide occupies 74–123 (TAEDHEVMKRLEAVMRDLDSLDHPEEASERETRGFNQEEIANRFTKKEKR). L143 carries the post-translational modification Leucine amide.

Belongs to the bombinin family. As to expression, expressed by the skin glands.

The protein resides in the secreted. In terms of biological role, maximin-6 shows antimicrobial activity against bacteria and against the fungus C.albicans. It has little hemolytic activity. Its function is as follows. Maximin-H10 shows antimicrobial activity against bacteria and against the fungus C.albicans. Shows strong hemolytic activity. The protein is Maximins 6/H10 of Bombina maxima (Giant fire-bellied toad).